We begin with the raw amino-acid sequence, 181 residues long: Acireductone dioxygenase (181 aa).

The segment covering 1–10 (MRAYIYDEES) has biased composition (acidic residues). The interval 1-23 (MRAYIYDEESQLSPQDEHESSQS) is disordered. Residues histidine 82, histidine 84, glutamate 88, and histidine 128 each contribute to the Fe(2+) site. Ni(2+) is bound by residues histidine 82, histidine 84, glutamate 88, and histidine 128.

It belongs to the acireductone dioxygenase (ARD) family. Requires Fe(2+) as cofactor. The cofactor is Ni(2+).

Its subcellular location is the cytoplasm. It is found in the nucleus. It carries out the reaction 1,2-dihydroxy-5-(methylsulfanyl)pent-1-en-3-one + O2 = 4-methylsulfanyl-2-oxobutanoate + formate + 2 H(+). It catalyses the reaction 1,2-dihydroxy-5-(methylsulfanyl)pent-1-en-3-one + O2 = 3-(methylsulfanyl)propanoate + CO + formate + 2 H(+). Its pathway is amino-acid biosynthesis; L-methionine biosynthesis via salvage pathway; L-methionine from S-methyl-5-thio-alpha-D-ribose 1-phosphate: step 5/6. Catalyzes 2 different reactions between oxygen and the acireductone 1,2-dihydroxy-3-keto-5-methylthiopentene (DHK-MTPene) depending upon the metal bound in the active site. Fe-containing acireductone dioxygenase (Fe-ARD) produces formate and 2-keto-4-methylthiobutyrate (KMTB), the alpha-ketoacid precursor of methionine in the methionine recycle pathway. Ni-containing acireductone dioxygenase (Ni-ARD) produces methylthiopropionate, carbon monoxide and formate, and does not lie on the methionine recycle pathway. This chain is Acireductone dioxygenase, found in Puccinia graminis f. sp. tritici (strain CRL 75-36-700-3 / race SCCL) (Black stem rust fungus).